The chain runs to 1400 residues: DNA-directed RNA polymerase subunit beta' (1400 aa).

Zn(2+) is bound by residues cysteine 71, cysteine 73, cysteine 86, and cysteine 89. 3 residues coordinate Mg(2+): aspartate 462, aspartate 464, and aspartate 466. The Zn(2+) site is built by cysteine 810, cysteine 884, cysteine 891, and cysteine 894.

This sequence belongs to the RNA polymerase beta' chain family. The RNAP catalytic core consists of 2 alpha, 1 beta, 1 beta' and 1 omega subunit. When a sigma factor is associated with the core the holoenzyme is formed, which can initiate transcription. The cofactor is Mg(2+). Zn(2+) serves as cofactor.

It carries out the reaction RNA(n) + a ribonucleoside 5'-triphosphate = RNA(n+1) + diphosphate. In terms of biological role, DNA-dependent RNA polymerase catalyzes the transcription of DNA into RNA using the four ribonucleoside triphosphates as substrates. This Rhodopseudomonas palustris (strain TIE-1) protein is DNA-directed RNA polymerase subunit beta'.